Reading from the N-terminus, the 249-residue chain is Caffeoyl-CoA O-methyltransferase 1 (249 aa).

K23 serves as a coordination point for substrate. S-adenosyl-L-methionine contacts are provided by residues T65, E87, 89 to 90 (GV), S95, D113, and A142. D165 is a substrate binding site. D165 provides a ligand contact to a divalent metal cation. D167 contributes to the S-adenosyl-L-methionine binding site. A divalent metal cation is bound by residues D191 and N192. A substrate-binding site is contributed by N196.

Belongs to the class I-like SAM-binding methyltransferase superfamily. Cation-dependent O-methyltransferase family. CCoAMT subfamily. Requires a divalent metal cation as cofactor. As to expression, mostly expressed in petal limbs and tubes, and, at low levels, in flower buds, stamens, pistils, stems, roots and leaves.

The protein resides in the cytoplasm. It localises to the cytosol. The catalysed reaction is (E)-caffeoyl-CoA + S-adenosyl-L-methionine = (E)-feruloyl-CoA + S-adenosyl-L-homocysteine + H(+). It carries out the reaction (E)-5-hydroxyferuloyl-CoA + S-adenosyl-L-methionine = (E)-sinapoyl-CoA + S-adenosyl-L-homocysteine + H(+). Its pathway is aromatic compound metabolism; phenylpropanoid biosynthesis. Functionally, involved in the production of floral volatile phenylpropanoids in flowers of fragrant cultivars (e.g. cv. Mitchell and cv. V26) from cinnamic acid, a common precursor with the anthocyanin biosynthesis pathway involved in flower pigmentation. Methylates caffeoyl-CoA to feruloyl-CoA, also able to methylate 5-hydroxyferuloyl-CoA. The sequence is that of Caffeoyl-CoA O-methyltransferase 1 from Petunia hybrida (Petunia).